Consider the following 1288-residue polypeptide: Photoreceptor cilium actin regulator (1288 aa).

The N-myristoyl glycine moiety is linked to residue Gly2. Residue Cys3 is the site of S-palmitoyl cysteine attachment. 9 disordered regions span residues Met78–Arg147, Gln368–Pro401, Gln423–Ser453, Pro467–Ala527, Asp563–Glu605, Gln686–Pro707, Ala813–Gln1109, Glu1132–Pro1169, and Leu1190–Ser1288. Composition is skewed to polar residues over residues Thr96–His109, Ser382–Pro401, and Cys434–Ser453. Positions Asp483–Asp495 are enriched in acidic residues. Polar residues-rich tracts occupy residues Ser848–Asn857, Ser894–His904, Pro927–Lys946, and Pro966–Ser976. Residues Pro1018–Thr1028 are compositionally biased toward low complexity. 2 stretches are compositionally biased toward pro residues: residues Pro1051–Ser1063 and Pro1071–Ser1094. The segment covering Gln1097–Glu1106 has biased composition (basic and acidic residues). The span at Asp1209 to Glu1226 shows a compositional bias: polar residues. A compositionally biased stretch (basic and acidic residues) spans Arg1268–Gln1277. Positions Pro1278–Ser1288 are enriched in polar residues.

In terms of tissue distribution, specifically expressed in retina.

The protein resides in the cell projection. It localises to the cilium. The protein localises to the photoreceptor outer segment. It is found in the photoreceptor inner segment. Plays an essential role for normal photoreceptor cell maintenance and vision. The polypeptide is Photoreceptor cilium actin regulator (Homo sapiens (Human)).